The sequence spans 473 residues: Presenilin-B (473 aa).

The segment at 1–141 (MSSDNNNDPF…PLLNKKEKDD (141 aa)) is disordered. Topologically, residues 1–164 (MSSDNNNDPF…DDEVSLQDFS (164 aa)) are cytoplasmic. A compositionally biased stretch (polar residues) spans 22 to 46 (RVSTTTSPNRQSINSSPKQSSPKST). Over residues 54–72 (NIILDLNDNNNDNNNTNNY) the composition is skewed to low complexity. Residues 79 to 89 (VDNKNKFENKD) show a composition bias toward basic and acidic residues. Residues 165–185 (SMIVSIIIPVSITMMAVVFFV) traverse the membrane as a helical segment. At 186–224 (KYLNNQTLYASTLSYTIAGGSSGGGSGADSITGNSFVDS) the chain is on the lumenal side. Asparagine 190 carries N-linked (GlcNAc...) asparagine glycosylation. Residues 225 to 245 (LIVAGIVLGMIIVTTVAFVLL) form a helical membrane-spanning segment. The Cytoplasmic segment spans residues 246–252 (YKYRCLK). The helical transmembrane segment at 253 to 273 (ILYGWLFLSVGMMLGSFGTTF) threads the bilayer. Topologically, residues 274–286 (FQAMLSAANLPLD) are lumenal. A helical transmembrane segment spans residues 287 to 307 (YITFAFLIFNFTVCGIIGVFW). Position 308 (tyrosine 308) is a topological domain, cytoplasmic. A helical transmembrane segment spans residues 309-329 (AHQYVNQLYLVIISVLMAISL). Residues 330-334 (TRLPQ) lie on the Lumenal side of the membrane. Residues 335-355 (WTIFTLLVIVAIYDLFAVLCP) form a helical membrane-spanning segment. Aspartate 348 is a catalytic residue. Over 356–389 (RGPLKVLVELSQERNENIPALVYETGKGSDSNLK) the chain is Cytoplasmic. Residues 390–410 (LGLGDFIFYSLLISRAALVHM) traverse the membrane as a helical segment. The active site involves aspartate 394. Residues 411-413 (SCV) lie on the Lumenal side of the membrane. The chain crosses the membrane as a helical span at residues 414-434 (FSTFIAILTGLFLTLLCLAIF). Residues 435–442 (KKALPALP) are Cytoplasmic-facing. The PAL signature appears at 439–441 (PAL). Positions 443-463 (ISIFLGILFYYLSNNFLTPFI) form an intramembrane region, helical. The Cytoplasmic portion of the chain corresponds to 464–473 (EALTLSQIFV).

It belongs to the peptidase A22A family. In terms of assembly, homodimer. Component of the gamma-secretase complex, a complex composed of a presenilin homodimer, nicastrin, aph1 and pen2.

Its subcellular location is the endoplasmic reticulum membrane. It is found in the golgi apparatus membrane. Probable catalytic subunit of the gamma-secretase complex, an endoprotease complex that catalyzes the intramembrane cleavage of integral membrane proteins such as Notch receptors. Requires the other members of the gamma-secretase complex to have a protease activity. This chain is Presenilin-B (psenB), found in Dictyostelium discoideum (Social amoeba).